Here is a 551-residue protein sequence, read N- to C-terminus: High-affinity glucose transporter (551 aa).

Residues 1–27 (MSLKNWLLLRDIQYEGTFYKKFPHVYN) lie on the Cytoplasmic side of the membrane. A helical membrane pass occupies residues 28-48 (IYVIGFIACISGLMFGFDIAS). At 49–70 (MSSMIGTDVYKDYFSNPDSLTY) the chain is on the extracellular side. Residues 71–91 (GGITASMAGGSFLGSLISPNF) form a helical membrane-spanning segment. The Cytoplasmic segment spans residues 92 to 98 (SDAFGRK). A helical membrane pass occupies residues 99-119 (VSLHICAALWIIGAILQCAAQ). Residues 120–123 (DQAM) lie on the Extracellular side of the membrane. The chain crosses the membrane as a helical span at residues 124 to 144 (LIVGRVISGMGIGFGSSAAPV). Residues 145–155 (YCSEISPPKIR) lie on the Cytoplasmic side of the membrane. Residues 156-176 (GTISGLFQFSVTVGIMVLFYI) traverse the membrane as a helical segment. Residues 177 to 190 (GYGCHFIDGAAAFR) lie on the Extracellular side of the membrane. A helical membrane pass occupies residues 191-211 (ITWGLQMVPGLILMVGVFFIP). Over 212–289 (ESPRWLANHD…VGVSAQMWQQ (78 aa)) the chain is Cytoplasmic. Residues 290–310 (LCGMNVMMYYIVYIFNMAGYT) form a helical membrane-spanning segment. Residues 311–315 (GNTNL) are Extracellular-facing. A helical transmembrane segment spans residues 316 to 336 (VASSIQYVLNVVMTIPALFLI). The Cytoplasmic portion of the chain corresponds to 337 to 343 (DKFGRRP). A helical transmembrane segment spans residues 344–364 (VLIIGGIFMFTWLFSVAGILA). Over 365–395 (TYSVPAPGGVNGDDTVTIQIPSENTSAANGV) the chain is Extracellular. N-linked (GlcNAc...) asparagine glycosylation is present at asparagine 388. Residues 396-416 (IASSYLFVCFFAPTWGIGIWI) form a helical membrane-spanning segment. Residues 417-432 (YCSEIFNNMERAKGSA) are Cytoplasmic-facing. Residues 433-453 (LSAATNWAFNFALAMFVPSAF) form a helical membrane-spanning segment. Residues 454 to 459 (KNISWK) are Extracellular-facing. Residues 460-480 (TYIIFGVFSVALTIQTFFMFP) traverse the membrane as a helical segment. Residues 481–551 (ETKGKTLEEI…DRSDSASNSN (71 aa)) lie on the Cytoplasmic side of the membrane.

This sequence belongs to the major facilitator superfamily. Sugar transporter (TC 2.A.1.1) family.

Its subcellular location is the membrane. Functionally, high-affinity glucose transporter. The chain is High-affinity glucose transporter (HGT1) from Kluyveromyces lactis (strain ATCC 8585 / CBS 2359 / DSM 70799 / NBRC 1267 / NRRL Y-1140 / WM37) (Yeast).